We begin with the raw amino-acid sequence, 274 residues long: Pantothenate synthetase (274 aa).

26-33 (MGNLHAGH) serves as a coordination point for ATP. The active-site Proton donor is the His33. Position 57 (Gln57) interacts with (R)-pantoate. Beta-alanine is bound at residue Gln57. 143–146 (GKKD) provides a ligand contact to ATP. Gln149 is a (R)-pantoate binding site. Residues Val172 and 180 to 183 (LSSR) contribute to the ATP site.

Belongs to the pantothenate synthetase family. Homodimer.

The protein resides in the cytoplasm. It catalyses the reaction (R)-pantoate + beta-alanine + ATP = (R)-pantothenate + AMP + diphosphate + H(+). Its pathway is cofactor biosynthesis; (R)-pantothenate biosynthesis; (R)-pantothenate from (R)-pantoate and beta-alanine: step 1/1. Functionally, catalyzes the condensation of pantoate with beta-alanine in an ATP-dependent reaction via a pantoyl-adenylate intermediate. The chain is Pantothenate synthetase from Dechloromonas aromatica (strain RCB).